Reading from the N-terminus, the 1022-residue chain is Translation initiation factor IF-2 (1022 aa).

A compositionally biased stretch (basic and acidic residues) spans 82-94; sequence EQSRKTLEKEQHL. 2 disordered regions span residues 82–129 and 342–436; these read EQSR…AVPA and SENK…QREL. Residues 104–115 are compositionally biased toward low complexity; it reads ASKSSAKGSESA. Residues 375-384 are compositionally biased toward basic residues; the sequence is KAKKGKKKKK. Residues 421-436 are compositionally biased toward basic and acidic residues; sequence SEREREQEEGAAQREL. The region spanning 519 to 689 is the tr-type G domain; sequence TRPPVVTIMG…LTEAELRELK (171 aa). Positions 528-535 are G1; the sequence is GHVDHGKT. 528–535 is a binding site for GTP; that stretch reads GHVDHGKT. The G2 stretch occupies residues 553-557; that stretch reads GITQH. The tract at residues 575–578 is G3; sequence DTPG. GTP contacts are provided by residues 575–579 and 629–632; these read DTPGH and NKID. The tract at residues 629–632 is G4; the sequence is NKID. A G5 region spans residues 665-667; sequence SAK.

Belongs to the TRAFAC class translation factor GTPase superfamily. Classic translation factor GTPase family. IF-2 subfamily.

It is found in the cytoplasm. In terms of biological role, one of the essential components for the initiation of protein synthesis. Protects formylmethionyl-tRNA from spontaneous hydrolysis and promotes its binding to the 30S ribosomal subunits. Also involved in the hydrolysis of GTP during the formation of the 70S ribosomal complex. This chain is Translation initiation factor IF-2, found in Chlorobium chlorochromatii (strain CaD3).